The sequence spans 295 residues: sn-glycerol-3-phosphate transport system permease protein UgpA (295 aa).

The Cytoplasmic segment spans residues Met1–Arg11. A helical transmembrane segment spans residues Trp12–Pro32. The Periplasmic portion of the chain corresponds to Ala33–Ala80. Residues Ile76–Gln284 form the ABC transmembrane type-1 domain. Residues Leu81–Val101 form a helical membrane-spanning segment. Residues Arg102–Thr109 lie on the Cytoplasmic side of the membrane. Residues Leu110 to Phe130 traverse the membrane as a helical segment. At Asn131 to Ala157 the chain is on the periplasmic side. A helical transmembrane segment spans residues Met158 to Phe178. At Ala179–Ser207 the chain is on the cytoplasmic side. A helical membrane pass occupies residues Leu208–Phe228. The Periplasmic segment spans residues Asp229–Asp262. A helical membrane pass occupies residues Leu263–Val283. Residues Gln284–Gln295 are Cytoplasmic-facing.

This sequence belongs to the binding-protein-dependent transport system permease family. UgpAE subfamily. In terms of assembly, the complex is composed of two ATP-binding proteins (UgpC), two transmembrane proteins (UgpA and UgpE) and a solute-binding protein (UgpB).

It localises to the cell inner membrane. Functionally, part of the ABC transporter complex UgpBAEC involved in sn-glycerol-3-phosphate (G3P) import. Probably responsible for the translocation of the substrate across the membrane. The chain is sn-glycerol-3-phosphate transport system permease protein UgpA (ugpA) from Salmonella typhi.